The sequence spans 88 residues: Apolipoprotein C-I (88 aa).

The first 26 residues, Met1–Ala26, serve as a signal peptide directing secretion.

The protein belongs to the apolipoprotein C1 family.

Its subcellular location is the secreted. In terms of biological role, inhibitor of lipoprotein binding to the low density lipoprotein (LDL) receptor, LDL receptor-related protein, and very low density lipoprotein (VLDL) receptor. Associates with high density lipoproteins (HDL) and the triacylglycerol-rich lipoproteins in the plasma and makes up about 10% of the protein of the VLDL and 2% of that of HDL. Appears to interfere directly with fatty acid uptake and is also the major plasma inhibitor of cholesteryl ester transfer protein (CETP). Modulates the interaction of APOE with beta-migrating VLDL and inhibits binding of beta-VLDL to the LDL receptor-related protein. Binds free fatty acids and reduces their intracellular esterification. The protein is Apolipoprotein C-I (APOC1) of Myodes glareolus (Bank vole).